Consider the following 553-residue polypeptide: Ubiquitin carboxyl-terminal hydrolase 17-like protein 15 (553 aa).

Residues 80 to 375 (AGLQNMGNTC…QAYVLFYIQK (296 aa)) enclose the USP domain. The active-site Nucleophile is Cys89. His334 acts as the Proton acceptor in catalysis. Basic and acidic residues-rich tracts occupy residues 382-392 (SESVSRGREPR) and 398-413 (DTDR…RDHP). Disordered regions lie at residues 382-413 (SESV…RDHP) and 491-524 (STTP…HSKR). The span at 496–505 (HQESMNTGTL) shows a compositional bias: polar residues. The segment covering 510–524 (GRARRSKGKNKHSKR) has biased composition (basic residues).

Belongs to the peptidase C19 family. USP17 subfamily.

The protein resides in the nucleus. The protein localises to the endoplasmic reticulum. The enzyme catalyses Thiol-dependent hydrolysis of ester, thioester, amide, peptide and isopeptide bonds formed by the C-terminal Gly of ubiquitin (a 76-residue protein attached to proteins as an intracellular targeting signal).. Functionally, deubiquitinating enzyme that removes conjugated ubiquitin from specific proteins to regulate different cellular processes that may include cell proliferation, progression through the cell cycle, apoptosis, cell migration, and the cellular response to viral infection. The sequence is that of Ubiquitin carboxyl-terminal hydrolase 17-like protein 15 (USP17L15) from Homo sapiens (Human).